The chain runs to 20 residues: Putative beta-neurotoxin (20 aa).

The LCN-type CS-alpha/beta domain occupies 1-20; it reads KDGYLVGSDGCKYSCLTRPG.

As to expression, expressed by the venom gland.

The protein resides in the secreted. Beta toxins bind voltage-independently at site-4 of sodium channels (Nav) and shift the voltage of activation toward more negative potentials thereby affecting sodium channel activation and promoting spontaneous and repetitive firing. This Tityus pachyurus (Colombian scorpion) protein is Putative beta-neurotoxin.